The sequence spans 344 residues: Adenosine kinase (344 aa).

Asp298 is an active-site residue.

This sequence belongs to the carbohydrate kinase PfkB family. The cofactor is Mg(2+).

It carries out the reaction adenosine + ATP = AMP + ADP + H(+). The protein operates within purine metabolism; AMP biosynthesis via salvage pathway; AMP from adenosine: step 1/1. The protein is Adenosine kinase (ADK) of Schizophyllum commune (Split gill fungus).